Consider the following 402-residue polypeptide: Tyrosine--tRNA ligase (402 aa).

The 'HIGH' region motif lies at 47-56 (PTAPDLHLGH). Residues 232 to 236 (KMSKS) carry the 'KMSKS' region motif. Lys235 is an ATP binding site. Positions 341-401 (VGILDVLKQI…GKKRFMKLNI (61 aa)) constitute an S4 RNA-binding domain.

This sequence belongs to the class-I aminoacyl-tRNA synthetase family. TyrS type 2 subfamily. Homodimer.

The protein resides in the cytoplasm. It catalyses the reaction tRNA(Tyr) + L-tyrosine + ATP = L-tyrosyl-tRNA(Tyr) + AMP + diphosphate + H(+). Functionally, catalyzes the attachment of tyrosine to tRNA(Tyr) in a two-step reaction: tyrosine is first activated by ATP to form Tyr-AMP and then transferred to the acceptor end of tRNA(Tyr). The polypeptide is Tyrosine--tRNA ligase (Helicobacter pylori (strain ATCC 700392 / 26695) (Campylobacter pylori)).